Here is a 250-residue protein sequence, read N- to C-terminus: Flavin-dependent thymidylate synthase (250 aa).

In terms of domain architecture, ThyX spans 7–233 (LRVQLIAKTD…PAVFADFEIA (227 aa)). FAD is bound by residues S71, 95-97 (RHR), and Q103. DUMP is bound by residues 92-95 (ELIR), 103-107 (QLSQR), and R172. A ThyX motif motif is present at residues 95 to 105 (RHRHFSYSQLS). FAD is bound by residues 188 to 190 (NYR) and H194. R199 lines the dUMP pocket. Catalysis depends on R199, which acts as the Involved in ionization of N3 of dUMP, leading to its activation.

Belongs to the thymidylate synthase ThyX family. Homotetramer. The cofactor is FAD.

It carries out the reaction dUMP + (6R)-5,10-methylene-5,6,7,8-tetrahydrofolate + NADPH + H(+) = dTMP + (6S)-5,6,7,8-tetrahydrofolate + NADP(+). It participates in pyrimidine metabolism; dTTP biosynthesis. Catalyzes the reductive methylation of 2'-deoxyuridine-5'-monophosphate (dUMP) to 2'-deoxythymidine-5'-monophosphate (dTMP) while utilizing 5,10-methylenetetrahydrofolate (mTHF) as the methyl donor, and NADPH and FADH(2) as the reductant. This Mycobacterium avium (strain 104) protein is Flavin-dependent thymidylate synthase.